We begin with the raw amino-acid sequence, 197 residues long: Protein GrpE (197 aa).

The interval 1 to 39 (MSSKEQKTPEGQAPEEIIMDQHEEIEAVEPEASAEQVDP) is disordered.

The protein belongs to the GrpE family. In terms of assembly, homodimer.

The protein localises to the cytoplasm. Functionally, participates actively in the response to hyperosmotic and heat shock by preventing the aggregation of stress-denatured proteins, in association with DnaK and GrpE. It is the nucleotide exchange factor for DnaK and may function as a thermosensor. Unfolded proteins bind initially to DnaJ; upon interaction with the DnaJ-bound protein, DnaK hydrolyzes its bound ATP, resulting in the formation of a stable complex. GrpE releases ADP from DnaK; ATP binding to DnaK triggers the release of the substrate protein, thus completing the reaction cycle. Several rounds of ATP-dependent interactions between DnaJ, DnaK and GrpE are required for fully efficient folding. The chain is Protein GrpE from Escherichia coli O45:K1 (strain S88 / ExPEC).